A 246-amino-acid polypeptide reads, in one-letter code: 3-deoxy-manno-octulosonate cytidylyltransferase (246 aa).

Belongs to the KdsB family.

It localises to the cytoplasm. It catalyses the reaction 3-deoxy-alpha-D-manno-oct-2-ulosonate + CTP = CMP-3-deoxy-beta-D-manno-octulosonate + diphosphate. It functions in the pathway nucleotide-sugar biosynthesis; CMP-3-deoxy-D-manno-octulosonate biosynthesis; CMP-3-deoxy-D-manno-octulosonate from 3-deoxy-D-manno-octulosonate and CTP: step 1/1. Its pathway is bacterial outer membrane biogenesis; lipopolysaccharide biosynthesis. Activates KDO (a required 8-carbon sugar) for incorporation into bacterial lipopolysaccharide in Gram-negative bacteria. The protein is 3-deoxy-manno-octulosonate cytidylyltransferase of Leptospira biflexa serovar Patoc (strain Patoc 1 / Ames).